The chain runs to 121 residues: MSISKDDILNAVAEMSVMDVVELITMMEEKFGVSAAAAVAVAAGPAEAAEEKTEFDVILKGIGGNKVAVIKAVRGATGLGLKEAKDLVESAPAALKEGVSKDDAEALKKALEEAGAEVEVK.

The protein belongs to the bacterial ribosomal protein bL12 family. Homodimer. Part of the ribosomal stalk of the 50S ribosomal subunit. Forms a multimeric L10(L12)X complex, where L10 forms an elongated spine to which 2 to 4 L12 dimers bind in a sequential fashion. Binds GTP-bound translation factors.

Forms part of the ribosomal stalk which helps the ribosome interact with GTP-bound translation factors. Is thus essential for accurate translation. The polypeptide is Large ribosomal subunit protein bL12 (Proteus mirabilis (strain HI4320)).